Here is a 1179-residue protein sequence, read N- to C-terminus: Calcium-activated potassium channel subunit alpha-1 (1179 aa).

Residues 1 to 24 (MANGGGGGGGSSGGGGGGGGGGSG) show a composition bias toward gly residues. Residues 1–62 (MANGGGGGGG…SSSSSSSSSV (62 aa)) are disordered. Topologically, residues 1 to 87 (MANGGGGGGG…VPCDSRGQRM (87 aa)) are extracellular. The segment covering 41-61 (SSSSSSSSSSSSSSSSSSSSS) has biased composition (low complexity). The helical transmembrane segment at 88-108 (WWAFLASSMVTFFGGLFIILL) threads the bilayer. Residues 109 to 179 (WRTLKYLWTV…MISAQTLTGR (71 aa)) are Cytoplasmic-facing. Residues Cys-119, Cys-120, and Cys-122 are each lipidated (S-palmitoyl cysteine). The chain crosses the membrane as a helical span at residues 180-200 (VLVVLVFALSIGALVIYFIDS). Residues 201-215 (SNPIESCQNFYKDFT) are Extracellular-facing. The helical transmembrane segment at 216–236 (LQIDMAFNVFFLLYFGLRFIA) threads the bilayer. At 237–240 (ANDK) the chain is on the cytoplasmic side. Residues 241–261 (LWFWLEVNSVVDFFTVPPVFV) traverse the membrane as a helical segment. At 262-265 (SVYL) the chain is on the extracellular side. The chain crosses the membrane as a helical; Voltage-sensor span at residues 266 to 286 (NRSWLGLRFLRALRLIQFSEI). The Cytoplasmic portion of the chain corresponds to 287–301 (LQFLNILKTSNSIKL). A helical transmembrane segment spans residues 302–322 (VNLLSIFISTWLTAAGFIHLV). Residues 323 to 336 (ENSGDPWENFQNNQ) are Extracellular-facing. The pore-forming intramembrane region spans 337-359 (ALTYWECVYLLMVTMSTVGYGDV). The short motif at 353–356 (TVGY) is the Selectivity for potassium element. Over 360 to 368 (YAKTTLGRL) the chain is Extracellular. The helical transmembrane segment at 369–389 (FMVFFILGGLAMFASYVPEII) threads the bilayer. Residues 390–1179 (ELIGNRKKYG…KQKYVQEERL (790 aa)) lie on the Cytoplasmic side of the membrane. One can recognise an RCK N-terminal 1 domain in the interval 408 to 550 (RKHIVVCGHI…WNWKEGDDAI (143 aa)). Residues Glu-440, Gln-463, and Glu-465 each contribute to the Mg(2+) site. The interval 557-577 (LGFIAQSCLAQGLSTMLANLF) is segment S7. The segment S8 stretch occupies residues 614–634 (LSFPTVCELCFVKLKLLMIAI). Residues 678–682 (CKACH) form a heme-binding motif region. A disordered region spans residues 702 to 730 (EQPSTLSPKKKQRNGGMRNSPNSSPKLMR). Thr-706 is modified (phosphothreonine). 3 positions are modified to phosphoserine: Ser-708, Ser-721, and Ser-725. Positions 780–800 (VLSGHVVVCIFGDVSSALIGL) are segment S9. In terms of domain architecture, RCK N-terminal 2 spans 782-926 (SGHVVVCIFG…MDRSSPDNSP (145 aa)). Position 913 is a phosphothreonine (Thr-913). Phosphoserine occurs at positions 921 and 925. The Calcium bowl signature appears at 946–968 (TELVNDTNVQFLDQDDDDDPDTE). Ca(2+)-binding residues include Gln-955, Asp-958, Asp-961, and Asp-963. A segment S10 region spans residues 975–995 (FACGTAFAVSVLDSLMSATYF). A compositionally biased stretch (low complexity) spans 1129–1154 (RASLSHSSHSSQSSSKKSSSVHSIPS). Positions 1129–1179 (RASLSHSSHSSQSSSKKSSSVHSIPSTANRQNRPKSRESRDKQKYVQEERL) are disordered. The span at 1163–1179 (KSRESRDKQKYVQEERL) shows a compositional bias: basic and acidic residues. Ser-1164 and Ser-1167 each carry phosphoserine.

This sequence belongs to the potassium channel family. Calcium-activated (TC 1.A.1.3) subfamily. KCa1.1/KCNMA1 sub-subfamily. In terms of assembly, homotetramer; which constitutes the calcium-activated potassium channel. Interacts with beta subunits KCNMB1, KCNMB2, KCNMB3 and KCNMB4. Interacts with gamma subunits LRRC26, LRRC38, LRRC52 and LRRC55. Beta and gamma subunits are accessory, and modulate its activity. Interacts with RAB11B. Phosphorylated. Phosphorylation by kinases such as PKA and/or PKG. In smooth muscles, phosphorylation affects its activity. In terms of processing, palmitoylation by ZDHHC22 and ZDHHC23 within the intracellular linker between the S0 and S1 transmembrane domains regulates localization to the plasma membrane. Depalmitoylated by LYPLA1 and LYPLAL1, leading to retard exit from the trans-Golgi network.

It localises to the cell membrane. Its subcellular location is the endoplasmic reticulum membrane. The enzyme catalyses K(+)(in) = K(+)(out). Ethanol and carbon monoxide-bound heme increase channel activation. Heme inhibits channel activation. Functionally, potassium channel activated by both membrane depolarization or increase in cytosolic Ca(2+) that mediates export of K(+). It is also activated by the concentration of cytosolic Mg(2+). Its activation dampens the excitatory events that elevate the cytosolic Ca(2+) concentration and/or depolarize the cell membrane. It therefore contributes to repolarization of the membrane potential. Plays a key role in controlling excitability in a number of systems, such as regulation of the contraction of smooth muscle, the tuning of hair cells in the cochlea, regulation of transmitter release, and innate immunity. In smooth muscles, its activation by high level of Ca(2+), caused by ryanodine receptors in the sarcoplasmic reticulum, regulates the membrane potential. In cochlea cells, its number and kinetic properties partly determine the characteristic frequency of each hair cell and thereby helps to establish a tonotopic map. Kinetics of KCNMA1 channels are determined by alternative splicing, phosphorylation status and its combination with modulating beta subunits. Highly sensitive to both iberiotoxin (IbTx) and charybdotoxin (CTX). Potassium channel activated by both membrane depolarization or increase in cytosolic Ca(2+) that mediates export of K(+). The sequence is that of Calcium-activated potassium channel subunit alpha-1 (KCNMA1) from Oryctolagus cuniculus (Rabbit).